A 303-amino-acid polypeptide reads, in one-letter code: Ornithine carbamoyltransferase (303 aa).

Carbamoyl phosphate contacts are provided by residues 52–55, Gln-79, Arg-103, and 130–133; these read STRT and HPCQ. L-ornithine contacts are provided by residues Asn-161, Asp-222, and 226 to 227; that span reads SM. Residues 262–263 and Lys-290 contribute to the carbamoyl phosphate site; that span reads CL.

This sequence belongs to the aspartate/ornithine carbamoyltransferase superfamily. OTCase family.

The protein resides in the cytoplasm. It catalyses the reaction carbamoyl phosphate + L-ornithine = L-citrulline + phosphate + H(+). Its pathway is amino-acid biosynthesis; L-arginine biosynthesis; L-arginine from L-ornithine and carbamoyl phosphate: step 1/3. Its function is as follows. Reversibly catalyzes the transfer of the carbamoyl group from carbamoyl phosphate (CP) to the N(epsilon) atom of ornithine (ORN) to produce L-citrulline. In Desulfotalea psychrophila (strain LSv54 / DSM 12343), this protein is Ornithine carbamoyltransferase.